Reading from the N-terminus, the 509-residue chain is Photosystem II CP47 reaction center protein (509 aa).

A run of 6 helical transmembrane segments spans residues 21–36 (AVHM…WAGS), 101–115 (IVFS…IWHW), 140–156 (GIHL…FGAF), 203–218 (IAAG…FHLS), 237–253 (VLSS…AFVV), and 458–473 (SFAL…HGSR).

It belongs to the PsbB/PsbC family. PsbB subfamily. In terms of assembly, PSII is composed of 1 copy each of membrane proteins PsbA, PsbB, PsbC, PsbD, PsbE, PsbF, PsbH, PsbI, PsbJ, PsbK, PsbL, PsbM, PsbT, PsbX, PsbY, PsbZ, Psb30/Ycf12, at least 3 peripheral proteins of the oxygen-evolving complex and a large number of cofactors. It forms dimeric complexes. Binds multiple chlorophylls. PSII binds additional chlorophylls, carotenoids and specific lipids. serves as cofactor.

The protein localises to the plastid. The protein resides in the chloroplast thylakoid membrane. Its function is as follows. One of the components of the core complex of photosystem II (PSII). It binds chlorophyll and helps catalyze the primary light-induced photochemical processes of PSII. PSII is a light-driven water:plastoquinone oxidoreductase, using light energy to abstract electrons from H(2)O, generating O(2) and a proton gradient subsequently used for ATP formation. The polypeptide is Photosystem II CP47 reaction center protein (Populus deltoides (Eastern poplar)).